A 319-amino-acid polypeptide reads, in one-letter code: Acetylglutamate kinase (319 aa).

Residues 74–75 (GG), R96, and N210 contribute to the substrate site.

It belongs to the acetylglutamate kinase family. ArgB subfamily.

Its subcellular location is the cytoplasm. The catalysed reaction is N-acetyl-L-glutamate + ATP = N-acetyl-L-glutamyl 5-phosphate + ADP. It participates in amino-acid biosynthesis; L-arginine biosynthesis; N(2)-acetyl-L-ornithine from L-glutamate: step 2/4. Its function is as follows. Catalyzes the ATP-dependent phosphorylation of N-acetyl-L-glutamate. The polypeptide is Acetylglutamate kinase (Pseudarthrobacter chlorophenolicus (strain ATCC 700700 / DSM 12829 / CIP 107037 / JCM 12360 / KCTC 9906 / NCIMB 13794 / A6) (Arthrobacter chlorophenolicus)).